A 568-amino-acid chain; its full sequence is DNA ligase (568 aa).

Residue E249 coordinates ATP. The active-site N6-AMP-lysine intermediate is K251. The ATP site is built by R256, R271, E301, F342, R418, and K424.

It belongs to the ATP-dependent DNA ligase family. The cofactor is Mg(2+).

It catalyses the reaction ATP + (deoxyribonucleotide)n-3'-hydroxyl + 5'-phospho-(deoxyribonucleotide)m = (deoxyribonucleotide)n+m + AMP + diphosphate.. In terms of biological role, DNA ligase that seals nicks in double-stranded DNA during DNA replication, DNA recombination and DNA repair. The chain is DNA ligase from Methanocella arvoryzae (strain DSM 22066 / NBRC 105507 / MRE50).